Consider the following 152-residue polypeptide: UPF0266 membrane protein YobD (152 aa).

3 helical membrane passes run 6 to 26, 45 to 65, and 67 to 87; these read LVLI…QFIM, IDSV…VTNH, and ALIT…IFWI.

This sequence belongs to the UPF0266 family.

The protein localises to the cell inner membrane. The protein is UPF0266 membrane protein YobD of Escherichia coli O45:K1 (strain S88 / ExPEC).